Consider the following 500-residue polypeptide: UDP-N-acetylmuramoyl-L-alanyl-D-glutamate--2,6-diaminopimelate ligase (500 aa).

Ser-38 lines the UDP-N-acetyl-alpha-D-muramoyl-L-alanyl-D-glutamate pocket. Position 118–124 (118–124 (GTNGKTS)) interacts with ATP. Residues 160–161 (TT), Ser-187, and Arg-195 each bind UDP-N-acetyl-alpha-D-muramoyl-L-alanyl-D-glutamate. Residue Lys-227 is modified to N6-carboxylysine. Meso-2,6-diaminopimelate contacts are provided by residues Arg-395, 419-422 (DNPR), Gly-471, and Glu-475. The short motif at 419–422 (DNPR) is the Meso-diaminopimelate recognition motif element.

The protein belongs to the MurCDEF family. MurE subfamily. It depends on Mg(2+) as a cofactor. Post-translationally, carboxylation is probably crucial for Mg(2+) binding and, consequently, for the gamma-phosphate positioning of ATP.

The protein localises to the cytoplasm. It carries out the reaction UDP-N-acetyl-alpha-D-muramoyl-L-alanyl-D-glutamate + meso-2,6-diaminopimelate + ATP = UDP-N-acetyl-alpha-D-muramoyl-L-alanyl-gamma-D-glutamyl-meso-2,6-diaminopimelate + ADP + phosphate + H(+). Its pathway is cell wall biogenesis; peptidoglycan biosynthesis. Catalyzes the addition of meso-diaminopimelic acid to the nucleotide precursor UDP-N-acetylmuramoyl-L-alanyl-D-glutamate (UMAG) in the biosynthesis of bacterial cell-wall peptidoglycan. The polypeptide is UDP-N-acetylmuramoyl-L-alanyl-D-glutamate--2,6-diaminopimelate ligase (Leptospira borgpetersenii serovar Hardjo-bovis (strain L550)).